Here is a 510-residue protein sequence, read N- to C-terminus: Gallate 1-beta-glucosyltransferase (510 aa).

Residue His-19 is the Proton acceptor of the active site. Residue His-19 coordinates an anthocyanidin. UDP-alpha-D-glucose contacts are provided by Gln-343, His-358, Trp-361, Asn-362, Ser-363, and Glu-366. Gly-381 is an an anthocyanidin binding site. UDP-alpha-D-glucose-binding residues include Asp-382 and Gln-383.

It belongs to the UDP-glycosyltransferase family. Expressed in swelling buds and young leaves.

It carries out the reaction 3,4,5-trihydroxybenzoate + UDP-alpha-D-glucose = 1-O-galloyl-beta-D-glucose + UDP. It catalyses the reaction vanillate + UDP-alpha-D-glucose = 1-O-(4-hydroxy-3-methoxybenzoyl)-beta-D-glucose + UDP. The enzyme catalyses 3,4-dihydroxybenzoate + UDP-alpha-D-glucose = 1-O-(3,4-dihydroxy-benzoyl)-beta-D-glucose + UDP. Functionally, glucosyltransferase that catalyzes the formation of 1-O-beta-D-glucose esters with hydroxybenzoic acids as preferred glucosyl acceptors. Has the highest activity with 3,4-dihydroxybenzoate, vanillate and gallate in vitro. Gallate is the predicted native substrate of the enzyme, which thus catalyzes the formation of 1-O-galloyl-beta-D-glucose, the first committed step of gallotannin biosynthesis. The polypeptide is Gallate 1-beta-glucosyltransferase (Quercus robur (English oak)).